The following is a 509-amino-acid chain: Probable cytochrome P450 513A1 (509 aa).

The helical transmembrane segment at 2-19 (NYLVGLVLIFTIFYFFLQ) threads the bilayer. A heme-binding site is contributed by Cys454.

The protein belongs to the cytochrome P450 family. Requires heme as cofactor.

Its subcellular location is the membrane. The sequence is that of Probable cytochrome P450 513A1 (cyp513A1) from Dictyostelium discoideum (Social amoeba).